The sequence spans 92 residues: RQC P-site tRNA stabilizing factor (92 aa).

An S4 RNA-binding domain is found at Met5–Glu65.

This sequence belongs to the RqcP family. In terms of assembly, associates with stalled 50S ribosomal subunits. Binds to RqcH, 23S rRNA and the P-site tRNA. Does not require RqcH for association with 50S subunits.

Functionally, key component of the ribosome quality control system (RQC), a ribosome-associated complex that mediates the extraction of incompletely synthesized nascent chains from stalled ribosomes and their subsequent degradation. RqcH recruits Ala-charged tRNA, and with RqcP directs the elongation of stalled nascent chains on 50S ribosomal subunits, leading to non-templated C-terminal alanine extensions (Ala tail). The Ala tail promotes nascent chain degradation. RqcP is associated with the translocation-like movement of the peptidyl-tRNA from the A-site into the P-site. The chain is RQC P-site tRNA stabilizing factor from Listeria innocua serovar 6a (strain ATCC BAA-680 / CLIP 11262).